A 196-amino-acid polypeptide reads, in one-letter code: MAERGQSSSAEGGASSQLVVVGRILGVHGVKGWVKVYSYTDPMVNLQQYQPWHLKQGALNSGGSSAAGTWKPVKVTGFRPQGKGLIAQLEGVSDREAAAALVGQDIGVPADLLPQSGQGEYYWRDLIGLRVKHVNGMDLGSVTRMVETGANDVVVVRGDRNSLDRRERLIPWLPEDVITAISLEDGEMTVDWDPDF.

The PRC barrel domain occupies 118–196 (QGEYYWRDLI…EMTVDWDPDF (79 aa)).

It belongs to the RimM family. In terms of assembly, binds ribosomal protein uS19.

Its subcellular location is the cytoplasm. Its function is as follows. An accessory protein needed during the final step in the assembly of 30S ribosomal subunit, possibly for assembly of the head region. Essential for efficient processing of 16S rRNA. May be needed both before and after RbfA during the maturation of 16S rRNA. It has affinity for free ribosomal 30S subunits but not for 70S ribosomes. The sequence is that of Ribosome maturation factor RimM from Alcanivorax borkumensis (strain ATCC 700651 / DSM 11573 / NCIMB 13689 / SK2).